Consider the following 427-residue polypeptide: Glutamate-1-semialdehyde 2,1-aminomutase (427 aa).

An N6-(pyridoxal phosphate)lysine modification is found at Lys268.

This sequence belongs to the class-III pyridoxal-phosphate-dependent aminotransferase family. HemL subfamily. Pyridoxal 5'-phosphate is required as a cofactor.

It localises to the cytoplasm. The catalysed reaction is (S)-4-amino-5-oxopentanoate = 5-aminolevulinate. Its pathway is porphyrin-containing compound metabolism; protoporphyrin-IX biosynthesis; 5-aminolevulinate from L-glutamyl-tRNA(Glu): step 2/2. This is Glutamate-1-semialdehyde 2,1-aminomutase from Methanococcus maripaludis (strain C7 / ATCC BAA-1331).